A 430-amino-acid chain; its full sequence is Enolase (430 aa).

Gln-165 contributes to the (2R)-2-phosphoglycerate binding site. Glu-207 (proton donor) is an active-site residue. Asp-244, Glu-287, and Asp-314 together coordinate Mg(2+). Residues Lys-339, Arg-368, Ser-369, and Lys-390 each contribute to the (2R)-2-phosphoglycerate site. Residue Lys-339 is the Proton acceptor of the active site.

This sequence belongs to the enolase family. In terms of assembly, component of the RNA degradosome, a multiprotein complex involved in RNA processing and mRNA degradation. Requires Mg(2+) as cofactor.

The protein resides in the cytoplasm. The protein localises to the secreted. It localises to the cell surface. The catalysed reaction is (2R)-2-phosphoglycerate = phosphoenolpyruvate + H2O. It functions in the pathway carbohydrate degradation; glycolysis; pyruvate from D-glyceraldehyde 3-phosphate: step 4/5. Catalyzes the reversible conversion of 2-phosphoglycerate (2-PG) into phosphoenolpyruvate (PEP). It is essential for the degradation of carbohydrates via glycolysis. The polypeptide is Enolase (Stenotrophomonas maltophilia (strain R551-3)).